The primary structure comprises 522 residues: Gypsy retrotransposon integrase-like protein 1 (522 aa).

One can recognise an Integrase catalytic domain in the interval 135–292 (KVENPWSLVT…TPYFQMFSRN (158 aa)).

The chain is Gypsy retrotransposon integrase-like protein 1 (GIN1) from Macaca fascicularis (Crab-eating macaque).